The sequence spans 289 residues: tRNA-cytidine(32) 2-sulfurtransferase (289 aa).

Residues 49–54 (SGGKDS) carry the PP-loop motif motif. Positions 124, 127, and 215 each coordinate [4Fe-4S] cluster.

The protein belongs to the TtcA family. Homodimer. It depends on Mg(2+) as a cofactor. [4Fe-4S] cluster is required as a cofactor.

It localises to the cytoplasm. The catalysed reaction is cytidine(32) in tRNA + S-sulfanyl-L-cysteinyl-[cysteine desulfurase] + AH2 + ATP = 2-thiocytidine(32) in tRNA + L-cysteinyl-[cysteine desulfurase] + A + AMP + diphosphate + H(+). It functions in the pathway tRNA modification. Catalyzes the ATP-dependent 2-thiolation of cytidine in position 32 of tRNA, to form 2-thiocytidine (s(2)C32). The sulfur atoms are provided by the cysteine/cysteine desulfurase (IscS) system. This is tRNA-cytidine(32) 2-sulfurtransferase from Methylococcus capsulatus (strain ATCC 33009 / NCIMB 11132 / Bath).